We begin with the raw amino-acid sequence, 78 residues long: MEKQKLIDMEGVVIESLPNATFRVYLDNGCIVLTHISGKIRRNYIRILPGDRVKVELSPYDLTKGRITYRLRAKSSNN.

The S1-like domain occupies 1 to 72 (MEKQKLIDME…TKGRITYRLR (72 aa)).

This sequence belongs to the IF-1 family. In terms of assembly, component of the 30S ribosomal translation pre-initiation complex which assembles on the 30S ribosome in the order IF-2 and IF-3, IF-1 and N-formylmethionyl-tRNA(fMet); mRNA recruitment can occur at any time during PIC assembly.

It localises to the plastid. It is found in the chloroplast. One of the essential components for the initiation of protein synthesis. Stabilizes the binding of IF-2 and IF-3 on the 30S subunit to which N-formylmethionyl-tRNA(fMet) subsequently binds. Helps modulate mRNA selection, yielding the 30S pre-initiation complex (PIC). Upon addition of the 50S ribosomal subunit IF-1, IF-2 and IF-3 are released leaving the mature 70S translation initiation complex. This chain is Translation initiation factor IF-1, chloroplastic, found in Marchantia polymorpha (Common liverwort).